A 575-amino-acid polypeptide reads, in one-letter code: Intermediate filament protein ifa-1 (575 aa).

2 disordered regions span residues 1–30 (MMEI…TGNV) and 45–72 (SGAG…EKKE). A head region spans residues 1–72 (MMEITRETMS…RDSREREKKE (72 aa)). Residues 7-17 (ETMSFTSTTPS) show a composition bias toward polar residues. A compositionally biased stretch (basic and acidic residues) spans 63-72 (RDSREREKKE). The region spanning 69 to 422 (EKKEMSDLND…KMLEGEENRA (354 aa)) is the IF rod domain. The interval 73–104 (MSDLNDRLASYIEKVRFLEAQNRKLAADLDAL) is coil 1A. Residues 105–118 (RSKWGKDTHNIRNM) form a linker 1 region. Positions 119-256 (YEGELVDAQK…RVHDNEIKEL (138 aa)) are coil 1B. The interval 257–274 (QTLASRDTTPENREFFKN) is linker 12. The interval 275-422 (ELSSAIRDIR…KMLEGEENRA (148 aa)) is coil 2. The tail stretch occupies residues 423–572 (GLKQLVEQVV…EERATHIQRQ (150 aa)). Positions 455–572 (SRQSFQRSAK…EERATHIQRQ (118 aa)) constitute an LTD domain.

It belongs to the intermediate filament family. Forms some heteromeric filaments with ifb-1. Isoform d is abundantly expressed in the marginal cells of the pharynx, forming apicobasally oriented thick filament bundles that are attached to the apical and basal plasma membrane by hemi-adherens junctions. Expression of isoform c is also seen in the excretory cells and in the uterus. Isoform c is detectable in the amphid sensory neurins and the pharyngeal-intestinal valve. Both isoform c and isoform d are expressed in the rectum and vulva and in some neurons of the tail. In larvae, expression is seen in the excretory cell, the vulva, the rectum and in the thick filament bundles of the pharynx. Expression in pharynx begins in late embryos.

It localises to the cytoplasm. Cytoplasmic intermediate filaments make up the structural component of the cytoskeleton providing mechanical strength to cells. Essential protein required during embryogenesis especially for survival past the L1 larva stage, involved in intestine morphogenesis. The chain is Intermediate filament protein ifa-1 (ifa-1) from Caenorhabditis elegans.